Here is an 83-residue protein sequence, read N- to C-terminus: Cardiotoxin 7'' (83 aa).

The signal sequence occupies residues 1–21 (MKTLLLTLVVVTIVCLDLGYT). Cystine bridges form between Cys24-Cys43, Cys36-Cys61, Cys65-Cys76, and Cys77-Cys82.

The protein belongs to the three-finger toxin family. Short-chain subfamily. Orphan group XV sub-subfamily. Expressed by the venom gland.

Its subcellular location is the secreted. The protein localises to the target cell membrane. Functionally, has low cytotoxic activity. The sequence is that of Cardiotoxin 7'' from Naja atra (Chinese cobra).